Reading from the N-terminus, the 434-residue chain is Enolase A (434 aa).

Residues His-160 and Glu-169 each coordinate substrate. The Proton donor role is filled by Glu-212. Residues Asp-247, Glu-296, and Asp-321 each contribute to the Mg(2+) site. The substrate site is built by Glu-296 and Asp-321. Lys-346 functions as the Proton acceptor in the catalytic mechanism. Residues 373 to 376 (SHRS) and Lys-397 contribute to the substrate site.

The protein belongs to the enolase family. As to quaternary structure, homodimer. It depends on Mg(2+) as a cofactor.

The protein localises to the cytoplasm. The catalysed reaction is (2R)-2-phosphoglycerate = phosphoenolpyruvate + H2O. It functions in the pathway carbohydrate degradation; glycolysis; pyruvate from D-glyceraldehyde 3-phosphate: step 4/5. The chain is Enolase A (enoA) from Dictyostelium discoideum (Social amoeba).